The chain runs to 305 residues: tRNA uridine(34) hydroxylase (305 aa).

In terms of domain architecture, Rhodanese spans 124–219 (QDEETLVVDT…YLETIPKEES (96 aa)). Catalysis depends on cysteine 179, which acts as the Cysteine persulfide intermediate.

The protein belongs to the TrhO family.

The enzyme catalyses uridine(34) in tRNA + AH2 + O2 = 5-hydroxyuridine(34) in tRNA + A + H2O. Functionally, catalyzes oxygen-dependent 5-hydroxyuridine (ho5U) modification at position 34 in tRNAs. This Bartonella bacilliformis (strain ATCC 35685 / KC583 / Herrer 020/F12,63) protein is tRNA uridine(34) hydroxylase.